Here is a 67-residue protein sequence, read N- to C-terminus: DNA-directed RNA polymerase subunit omega (67 aa).

The protein belongs to the RNA polymerase subunit omega family. In terms of assembly, the RNAP catalytic core consists of 2 alpha, 1 beta, 1 beta' and 1 omega subunit. When a sigma factor is associated with the core the holoenzyme is formed, which can initiate transcription.

It catalyses the reaction RNA(n) + a ribonucleoside 5'-triphosphate = RNA(n+1) + diphosphate. Its function is as follows. Promotes RNA polymerase assembly. Latches the N- and C-terminal regions of the beta' subunit thereby facilitating its interaction with the beta and alpha subunits. The sequence is that of DNA-directed RNA polymerase subunit omega from Listeria monocytogenes serotype 4a (strain HCC23).